Reading from the N-terminus, the 334-residue chain is Holliday junction branch migration complex subunit RuvB (334 aa).

A large ATPase domain (RuvB-L) region spans residues 4 to 186; it reads ADRLIAPISN…FGIVQRLEYY (183 aa). ATP is bound by residues isoleucine 25, arginine 26, glycine 67, lysine 70, threonine 71, threonine 72, 133 to 135, arginine 176, tyrosine 186, and arginine 223; that span reads EDY. Threonine 71 is a Mg(2+) binding site. A small ATPAse domain (RuvB-S) region spans residues 187–257; the sequence is KVADLQHIVQ…TADRALNMLD (71 aa). Residues 260–334 are head domain (RuvB-H); that stretch reads HQGFDYMDRK…RAYLHFGIEK (75 aa). 2 residues coordinate DNA: arginine 315 and arginine 320.

This sequence belongs to the RuvB family. Homohexamer. Forms an RuvA(8)-RuvB(12)-Holliday junction (HJ) complex. HJ DNA is sandwiched between 2 RuvA tetramers; dsDNA enters through RuvA and exits via RuvB. An RuvB hexamer assembles on each DNA strand where it exits the tetramer. Each RuvB hexamer is contacted by two RuvA subunits (via domain III) on 2 adjacent RuvB subunits; this complex drives branch migration. In the full resolvosome a probable DNA-RuvA(4)-RuvB(12)-RuvC(2) complex forms which resolves the HJ.

The protein resides in the cytoplasm. The catalysed reaction is ATP + H2O = ADP + phosphate + H(+). Functionally, the RuvA-RuvB-RuvC complex processes Holliday junction (HJ) DNA during genetic recombination and DNA repair, while the RuvA-RuvB complex plays an important role in the rescue of blocked DNA replication forks via replication fork reversal (RFR). RuvA specifically binds to HJ cruciform DNA, conferring on it an open structure. The RuvB hexamer acts as an ATP-dependent pump, pulling dsDNA into and through the RuvAB complex. RuvB forms 2 homohexamers on either side of HJ DNA bound by 1 or 2 RuvA tetramers; 4 subunits per hexamer contact DNA at a time. Coordinated motions by a converter formed by DNA-disengaged RuvB subunits stimulates ATP hydrolysis and nucleotide exchange. Immobilization of the converter enables RuvB to convert the ATP-contained energy into a lever motion, pulling 2 nucleotides of DNA out of the RuvA tetramer per ATP hydrolyzed, thus driving DNA branch migration. The RuvB motors rotate together with the DNA substrate, which together with the progressing nucleotide cycle form the mechanistic basis for DNA recombination by continuous HJ branch migration. Branch migration allows RuvC to scan DNA until it finds its consensus sequence, where it cleaves and resolves cruciform DNA. The sequence is that of Holliday junction branch migration complex subunit RuvB from Vibrio cholerae serotype O1 (strain ATCC 39315 / El Tor Inaba N16961).